Here is a 471-residue protein sequence, read N- to C-terminus: Glutamate--tRNA ligase (471 aa).

Positions 9–19 (PSPTGYLHVGG) match the 'HIGH' region motif. 4 residues coordinate Zn(2+): C98, C100, C125, and H127. Positions 237-241 (KLSKR) match the 'KMSKS' region motif. K240 contacts ATP.

This sequence belongs to the class-I aminoacyl-tRNA synthetase family. Glutamate--tRNA ligase type 1 subfamily. As to quaternary structure, monomer. The cofactor is Zn(2+).

Its subcellular location is the cytoplasm. It carries out the reaction tRNA(Glu) + L-glutamate + ATP = L-glutamyl-tRNA(Glu) + AMP + diphosphate. Catalyzes the attachment of glutamate to tRNA(Glu) in a two-step reaction: glutamate is first activated by ATP to form Glu-AMP and then transferred to the acceptor end of tRNA(Glu). This is Glutamate--tRNA ligase from Salmonella arizonae (strain ATCC BAA-731 / CDC346-86 / RSK2980).